A 124-amino-acid polypeptide reads, in one-letter code: Small ribosomal subunit protein bS6 (124 aa).

This sequence belongs to the bacterial ribosomal protein bS6 family.

Binds together with bS18 to 16S ribosomal RNA. This is Small ribosomal subunit protein bS6 from Bordetella avium (strain 197N).